A 394-amino-acid chain; its full sequence is Chaperone protein DnaJ (394 aa).

Positions 4 to 68 (DYYEILGVSR…ELRARYDRFG (65 aa)) constitute a J domain. The CR-type zinc finger occupies 136-218 (GGEKQIRISH…CNGEGLAQTT (83 aa)). Zn(2+)-binding residues include Cys-149, Cys-152, Cys-166, Cys-169, Cys-192, Cys-195, Cys-206, and Cys-209. CXXCXGXG motif repeat units lie at residues 149–156 (CPVCGGSG), 166–173 (CPTCGGAG), 192–199 (CPTCGGAG), and 206–213 (CYNCNGEG).

This sequence belongs to the DnaJ family. Homodimer. Zn(2+) is required as a cofactor.

It localises to the cytoplasm. Participates actively in the response to hyperosmotic and heat shock by preventing the aggregation of stress-denatured proteins and by disaggregating proteins, also in an autonomous, DnaK-independent fashion. Unfolded proteins bind initially to DnaJ; upon interaction with the DnaJ-bound protein, DnaK hydrolyzes its bound ATP, resulting in the formation of a stable complex. GrpE releases ADP from DnaK; ATP binding to DnaK triggers the release of the substrate protein, thus completing the reaction cycle. Several rounds of ATP-dependent interactions between DnaJ, DnaK and GrpE are required for fully efficient folding. Also involved, together with DnaK and GrpE, in the DNA replication of plasmids through activation of initiation proteins. The polypeptide is Chaperone protein DnaJ (Synechococcus sp. (strain JA-3-3Ab) (Cyanobacteria bacterium Yellowstone A-Prime)).